The primary structure comprises 375 residues: Thiamine-phosphate synthase (375 aa).

Residues 1-127 (MTNAESRTVL…AACIESIRYQ (127 aa)) form a unknown region. Positions 128–375 (CYATFRELEL…SSDVCPLPND (248 aa)) are thiamine-phosphate synthase. Residues 183-185 (QLR) and Asn215 contribute to the 4-amino-2-methyl-5-(diphosphooxymethyl)pyrimidine site. Residues Asp216 and Glu235 each coordinate Mg(2+). 4-amino-2-methyl-5-(diphosphooxymethyl)pyrimidine-binding residues include Ser254 and Lys283. Gly315 is a binding site for 2-[(2R,5Z)-2-carboxy-4-methylthiazol-5(2H)-ylidene]ethyl phosphate.

This sequence belongs to the thiamine-phosphate synthase family. Requires Mg(2+) as cofactor.

It catalyses the reaction 2-[(2R,5Z)-2-carboxy-4-methylthiazol-5(2H)-ylidene]ethyl phosphate + 4-amino-2-methyl-5-(diphosphooxymethyl)pyrimidine + 2 H(+) = thiamine phosphate + CO2 + diphosphate. The catalysed reaction is 2-(2-carboxy-4-methylthiazol-5-yl)ethyl phosphate + 4-amino-2-methyl-5-(diphosphooxymethyl)pyrimidine + 2 H(+) = thiamine phosphate + CO2 + diphosphate. The enzyme catalyses 4-methyl-5-(2-phosphooxyethyl)-thiazole + 4-amino-2-methyl-5-(diphosphooxymethyl)pyrimidine + H(+) = thiamine phosphate + diphosphate. Its pathway is cofactor biosynthesis; thiamine diphosphate biosynthesis; thiamine phosphate from 4-amino-2-methyl-5-diphosphomethylpyrimidine and 4-methyl-5-(2-phosphoethyl)-thiazole: step 1/1. In terms of biological role, condenses 4-methyl-5-(beta-hydroxyethyl)thiazole monophosphate (THZ-P) and 2-methyl-4-amino-5-hydroxymethyl pyrimidine pyrophosphate (HMP-PP) to form thiamine monophosphate (TMP). The sequence is that of Thiamine-phosphate synthase (thiE) from Rhodopirellula baltica (strain DSM 10527 / NCIMB 13988 / SH1).